Consider the following 352-residue polypeptide: Probable gamma-glutamyl hydrolase 3 (352 aa).

The N-terminal stretch at 1 to 19 (MWRFCFFLSLLFFDVSAVK) is a signal peptide. The region spanning 49 to 352 (AADPNLNYKP…SGDDEVYIFT (304 aa)) is the Gamma-glutamyl hydrolase domain. Residue Cys166 is the Nucleophile of the active site. His279 is an active-site residue.

It belongs to the peptidase C26 family.

The protein resides in the vacuole. It is found in the secreted. Its subcellular location is the extracellular space. It localises to the cell wall. The catalysed reaction is (6S)-5,6,7,8-tetrahydrofolyl-(gamma-L-Glu)(n) + (n-1) H2O = (6S)-5,6,7,8-tetrahydrofolate + (n-1) L-glutamate. Cleaves the polyglutamate sidechains of folate polyglutamates in the vacuole. Is important for polyglutamyl tail length determination before vacuolar exit. Plays a role on folate stability and intracellular folate content. The sequence is that of Probable gamma-glutamyl hydrolase 3 (GGH3) from Arabidopsis thaliana (Mouse-ear cress).